Consider the following 66-residue polypeptide: U-limacoditoxin(59)-Dv128 (66 aa).

A signal peptide spans 1–20; the sequence is MRHLLVLLLICLSVIAMAQA. The tract at residues 21–66 is 3 X 16 AA tandem repeats of [FI]-G-G-G-L-G-G-A-V-G-G-R-R-R-R-D; that stretch reads TFGGGLGGAVGGRRRRDIGGGLGGAVGGRRRRDIGGGLGGAVGGKS. 2 tandem repeats follow at residues 22–37 and 38–53. G31 is modified (glycine amide). Positions 33–37 are excised as a propeptide; that stretch reads RRRRD. Position 47 is a glycine amide (G47). A propeptide spanning residues 49–53 is cleaved from the precursor; the sequence is RRRRD. One copy of the 3; half-length repeat lies at 54-64; it reads IGGGLGGAVGG.

This sequence belongs to the limacoditoxin-59 family. As to expression, expressed by the venom secretory cell of the spine. The spine is a cuticular structure containing a single large nucleated venom-secreting cell at its base. It is an independent unit capable of producing, storing and injecting venom. On the back of D.vulnerans caterpillars, spines are grouped together by 50 to 100 to form scoli, of which there are eight in D.vulnerans.

It is found in the secreted. Functionally, probable toxin. This is U-limacoditoxin(59)-Dv128 from Doratifera vulnerans (Mottled cup moth).